Here is a 664-residue protein sequence, read N- to C-terminus: Ent-copalyl diphosphate synthase 5 (664 aa).

Position 101 (Lys-101) interacts with substrate. Mg(2+) contacts are provided by Asp-233 and Asp-235. Residues 233-236 (DIDD) carry the DXDD motif motif. Lys-320 lines the substrate pocket.

The protein belongs to the terpene synthase family. Tpsc subfamily. It depends on Mg(2+) as a cofactor. As to expression, ubiquitous expression in roots, stems, leaves and flowers.

Its subcellular location is the plastid. It is found in the chloroplast. It catalyses the reaction (2E,6E,10E)-geranylgeranyl diphosphate = ent-copalyl diphosphate. The protein operates within secondary metabolite biosynthesis; terpenoid biosynthesis. Functionally, involved in the biosynthesis of ent-kaurene diterpenoids natural products such as oridonin, miltiradiene, eriocalyxin B and nezukol, known to exhibit antitumor, anti-inflammatory and antibacterial activities. Catalyzes the conversion of (2E,6E,10E)-geranylgeranyl diphosphate (GGPP) to ent-copalyl diphosphate (ent-CPP). The sequence is that of Ent-copalyl diphosphate synthase 5 from Isodon rubescens (Rabdosia rubescens).